We begin with the raw amino-acid sequence, 427 residues long: 12-alpha,13-alpha-dihydroxyfumitremorgin C prenyltransferase (427 aa).

Residue glutamate 94 coordinates substrate. Positions 105, 192, 194, 268, 353, 355, 419, and 423 each coordinate dimethylallyl diphosphate.

The protein belongs to the tryptophan dimethylallyltransferase family.

It catalyses the reaction 12alpha,13alpha-dihydroxyfumitremorgin C + dimethylallyl diphosphate = fumitremorgin B + diphosphate. It functions in the pathway mycotoxin biosynthesis. Functionally, 12-alpha,13-alpha-dihydroxyfumitremorgin C prenyltransferase; part of the gene cluster that mediates the biosynthesis of fumitremorgins, indole alkaloids that carry not only intriguing chemical structures, but also interesting biological and pharmacological activities. The biosynthesis of fumitremorgin-type alkaloids begins by condensation of the two amino acids L-tryptophan and L-proline to brevianamide F, catalyzed by the non-ribosomal peptide synthetase ftmA. Brevianamide F is then prenylated by the prenyltransferase ftmPT1/ftmB in the presence of dimethylallyl diphosphate, resulting in the formation of tryprostatin B. The three cytochrome P450 monooxygenases, ftmP450-1/ftmC, ftmP450-2/ftmE and ftmP450-3/FtmG, are responsible for the conversion of tryprostatin B to 6-hydroxytryprostatin B, tryprostatin A to fumitremorgin C and fumitremorgin C to 12,13-dihydroxyfumitremorgin C, respectively. The putative methyltransferase ftmMT/ftmD is expected for the conversion of 6-hydroxytryprostatin B to tryprostatin A. FtmPT2/FtmH catalyzes the prenylation of 12,13-dihydroxyfumitre-morgin C in the presence of dimethylallyl diphosphate, resulting in the formation of fumitremorgin B. Fumitremorgin B is further converted to verruculogen by ftmOx1/ftmF via the insertion of an endoperoxide bond between the two prenyl moieties. In some fungal species, verruculogen is further converted to fumitremorgin A, but the enzymes involved in this step have not been identified yet. The polypeptide is 12-alpha,13-alpha-dihydroxyfumitremorgin C prenyltransferase (Aspergillus fumigatus (Neosartorya fumigata)).